A 442-amino-acid polypeptide reads, in one-letter code: tRNA modification GTPase MnmE (442 aa).

(6S)-5-formyl-5,6,7,8-tetrahydrofolate contacts are provided by Arg-27, Glu-84, and Lys-124. A TrmE-type G domain is found at 221-366 (GLHVVIVGAP…LLTNLQNFAE (146 aa)). Residues 231 to 236 (NAGKSS), 250 to 256 (SEEAGTT), and 275 to 278 (DTAG) contribute to the GTP site. Residues Ser-235 and Thr-256 each coordinate Mg(2+). Lys-442 provides a ligand contact to (6S)-5-formyl-5,6,7,8-tetrahydrofolate.

It belongs to the TRAFAC class TrmE-Era-EngA-EngB-Septin-like GTPase superfamily. TrmE GTPase family. Homodimer. Heterotetramer of two MnmE and two MnmG subunits. K(+) is required as a cofactor.

It is found in the cytoplasm. Functionally, exhibits a very high intrinsic GTPase hydrolysis rate. Involved in the addition of a carboxymethylaminomethyl (cmnm) group at the wobble position (U34) of certain tRNAs, forming tRNA-cmnm(5)s(2)U34. The polypeptide is tRNA modification GTPase MnmE (Brucella anthropi (strain ATCC 49188 / DSM 6882 / CCUG 24695 / JCM 21032 / LMG 3331 / NBRC 15819 / NCTC 12168 / Alc 37) (Ochrobactrum anthropi)).